The chain runs to 286 residues: Deleted in azoospermia-like (286 aa).

Positions 30–105 (NTVFVGGIDI…KKLKLGPAIR (76 aa)) constitute an RRM domain. One can recognise a DAZ domain in the interval 155-180 (ACPYPSSPPMAIQQIPVGCQQPSYFQ).

Belongs to the RRM DAZ family. Interacts with the C-terminus of pabp1 and with epabp. Prior to oocyte maturation, found in a complex with epabp and pum2 proteins and spdy1 mRNA; pum2 dissociates from the complex during maturation. As to expression, germ-line specific; expressed in adult testis and ovary. Localized specifically to the oocyte and embryonic germ plasm and to migrating primordial germ cells (PGCs).

The protein localises to the cytoplasm. Functionally, RNA-binding protein that is required for primordial germ cell (PGC) differentiation and indirectly necessary for the migration of PGCs through the endoderm. May promote meiotic cell division during spermatogenesis. Shows a preference for G- and U-rich RNAs and probably binds the 3'-UTR of target mRNAs. Stimulates the initiation of translation of mRNAs through the recruitment of poly(A)-binding proteins (PABPs). This chain is Deleted in azoospermia-like, found in Xenopus tropicalis (Western clawed frog).